Reading from the N-terminus, the 257-residue chain is OCIA domain-containing protein 1 (257 aa).

Disordered stretches follow at residues 1-20 and 148-257; these read MDSP…PHPL and YSDE…SWTD. The OCIA domain occupies 1–110; it reads MDSPLNDGSH…MRLPNSHLGE (110 aa). A compositionally biased stretch (polar residues) spans 156–170; it reads GRSTSLNLDTESRPT. Residues 204-216 show a composition bias toward basic and acidic residues; it reads EDLRRRNREEYSK.

Belongs to the OCIAD1 family. Interacts with STAT3 and ARF1. In terms of tissue distribution, expressed in all cells of the primary lymph gland lobe.

It localises to the endosome. In terms of biological role, maintains stem cell potency. Involved in endocytic pathways that mediate signaling during hematopoiesis. This chain is OCIA domain-containing protein 1 (asrij), found in Drosophila melanogaster (Fruit fly).